A 299-amino-acid polypeptide reads, in one-letter code: Homeobox protein Nkx-2.5 (299 aa).

Positions 90 to 119 (KDPKDHKKDICPLQKTLEHDKREAEDPERP) are enriched in basic and acidic residues. The segment at 90–128 (KDPKDHKKDICPLQKTLEHDKREAEDPERPRQRKRRKPR) is disordered. The homeobox DNA-binding region spans 124-183 (RRKPRVLFSQAQVYELERRFKQQKYLSAPERDHLANVLKLTSTQVKIWFQNRRYKCKRQR).

It belongs to the NK-2 homeobox family. Homodimer (via the homeobox); binds DNA as homodimer. Heart and gut tissue.

The protein localises to the nucleus. Its function is as follows. Transcription factor required for the development of the heart and the spleen. Implicated in commitment to and/or differentiation of the myocardial lineage. May regulate the expression of genes involved in cardiogenesis and play a role in the formation of gut and the pharyngeal region. Binds to the core DNA motif of promoter. The protein is Homeobox protein Nkx-2.5 (nkx-2.5) of Xenopus laevis (African clawed frog).